The primary structure comprises 111 residues: Universal stress protein B (111 aa).

2 consecutive transmembrane segments (helical) span residues 1-21 and 90-110; these read MIST…NMAR and FLLT…MMMW.

The protein belongs to the universal stress protein B family.

The protein resides in the cell inner membrane. In Pectobacterium atrosepticum (strain SCRI 1043 / ATCC BAA-672) (Erwinia carotovora subsp. atroseptica), this protein is Universal stress protein B.